The following is a 449-amino-acid chain: UDP-N-acetylmuramoylalanine--D-glutamate ligase (449 aa).

119–125 (GTNGKTT) contributes to the ATP binding site.

It belongs to the MurCDEF family.

The protein resides in the cytoplasm. The enzyme catalyses UDP-N-acetyl-alpha-D-muramoyl-L-alanine + D-glutamate + ATP = UDP-N-acetyl-alpha-D-muramoyl-L-alanyl-D-glutamate + ADP + phosphate + H(+). The protein operates within cell wall biogenesis; peptidoglycan biosynthesis. Cell wall formation. Catalyzes the addition of glutamate to the nucleotide precursor UDP-N-acetylmuramoyl-L-alanine (UMA). The chain is UDP-N-acetylmuramoylalanine--D-glutamate ligase from Lactococcus lactis subsp. cremoris (strain MG1363).